The sequence spans 368 residues: 3-dehydroquinate synthase (368 aa).

NAD(+) contacts are provided by residues 112–116 (GVIGD), 136–137 (TT), K149, and K158. Positions 191, 256, and 273 each coordinate Zn(2+).

This sequence belongs to the sugar phosphate cyclases superfamily. Dehydroquinate synthase family. Requires Co(2+) as cofactor. The cofactor is Zn(2+). NAD(+) serves as cofactor.

Its subcellular location is the cytoplasm. It catalyses the reaction 7-phospho-2-dehydro-3-deoxy-D-arabino-heptonate = 3-dehydroquinate + phosphate. Its pathway is metabolic intermediate biosynthesis; chorismate biosynthesis; chorismate from D-erythrose 4-phosphate and phosphoenolpyruvate: step 2/7. In terms of biological role, catalyzes the conversion of 3-deoxy-D-arabino-heptulosonate 7-phosphate (DAHP) to dehydroquinate (DHQ). The polypeptide is 3-dehydroquinate synthase (Prochlorococcus marinus (strain NATL1A)).